Reading from the N-terminus, the 159-residue chain is Heterocyst differentiation protein HetP (159 aa).

The required to complement a hetP deletion stretch occupies residues 1-50 (MNQNTTGITNYNKAINPQQFDKVVEAILAGKYSWACVLMLRFAGYNPMHY).

It belongs to the HetP family. As to quaternary structure, in bacterial two-hybrid assays interacts weakly with Asl1930, Alr2902 and Alr3234.

In terms of biological role, promotes heterocyst differentiation and commitment when nitrogen is limiting. Interplay between the 4 HetP paralogs controls the timing of commitment to heterocyst formation and its duration. Epistatic analysis show that the 3 paralogs act upstream of hetP to delay commitment (asl1930, alr3234) or inhibit development (alr2902). Asl1930 and Alr3234 must also attenuate the activity of Alr2902. Required for heterocyst formation. Functions directly downstream of master regulator HetR to promote heterocyst differentiation, functioning downstream of patterning (cell choice). Partially functionally redundant with homologs alr2902 and asl1930 but not alr3234. Overexpression leads to more than wild-type levels of heterocysts. Overexpression in the absence of hetR partially bypasses hetR deletion, allowing differentiation of heterocysts, although they only fix nitrogen in the absence of oxygen (a Fox- Fix+ phenotype), suggesting they are not fully. This chain is Heterocyst differentiation protein HetP, found in Nostoc sp. (strain PCC 7120 / SAG 25.82 / UTEX 2576).